A 313-amino-acid chain; its full sequence is Glucosyl-dolichyl phosphate glucuronosyltransferase (313 aa).

A helical transmembrane segment spans residues 284-304 (LIAIFVFTAAVGFGYVYGLLT).

It belongs to the glycosyltransferase 2 family.

Its subcellular location is the cell membrane. It catalyses the reaction an archaeal dolichyl alpha-D-glucosyl phosphate + UDP-alpha-D-glucuronate = an archaeal dolichyl beta-D-glucuronosyl-(1-&gt;4)-alpha-D-glucosyl phosphate + UDP + H(+). It functions in the pathway cell surface structure biogenesis; S-layer biogenesis. In terms of biological role, involved in the protein N-glycosylation pathway responsible for the assembly and attachment of an N-linked pentasaccharide that decorates the S-layer glycoprotein and flagellins. Catalyzes the transfer of a glucuronate residue (GlcA) to a glucose residue already bound to a dolichol phosphate (DolP), a compound that serves as a glycan lipid carrier in Archaea. In vitro, is able to add GlcA to DolP-Glc in which the omega-position isoprene is not saturated. However, the likely physiological lipid substrate is alpha,omega-saturated. This chain is Glucosyl-dolichyl phosphate glucuronosyltransferase, found in Haloferax volcanii (strain ATCC 29605 / DSM 3757 / JCM 8879 / NBRC 14742 / NCIMB 2012 / VKM B-1768 / DS2) (Halobacterium volcanii).